Here is a 205-residue protein sequence, read N- to C-terminus: 7-methyl-GTP pyrophosphatase (205 aa).

Asp79 (proton acceptor) is an active-site residue.

This sequence belongs to the Maf family. YceF subfamily. A divalent metal cation serves as cofactor.

It is found in the cytoplasm. The enzyme catalyses N(7)-methyl-GTP + H2O = N(7)-methyl-GMP + diphosphate + H(+). Nucleoside triphosphate pyrophosphatase that hydrolyzes 7-methyl-GTP (m(7)GTP). May have a dual role in cell division arrest and in preventing the incorporation of modified nucleotides into cellular nucleic acids. This chain is 7-methyl-GTP pyrophosphatase, found in Paraburkholderia xenovorans (strain LB400).